The chain runs to 357 residues: F-box only protein 25 (357 aa).

Residues 1-83 (MPFLGQDWRS…DTAAHSFYRE (83 aa)) are interaction with beta-actin. The region spanning 224-271 (GLTLSDLPLHMLNNILYRFSDGWDIVTLGQVTPTLYMLSEDRRLWKRL) is the F-box domain.

Part of a SCF (SKP1-cullin-F-box) protein ligase complex consisting of FBXO25, SKP1, CUL1 and RBX1. Interacts directly with SKP1 and CUL1. Interacts (via C-terminus) with actin (via N-terminus).

Its subcellular location is the nucleus. Its pathway is protein modification; protein ubiquitination. Its function is as follows. Substrate-recognition component of the SCF (SKP1-CUL1-F-box protein)-type E3 ubiquitin ligase complex. May play a role in accumulation of expanded polyglutamine (polyQ) protein huntingtin (HTT). This chain is F-box only protein 25 (Fbxo25), found in Rattus norvegicus (Rat).